Here is a 79-residue protein sequence, read N- to C-terminus: uncharacterized protein (79 aa).

The 52-residue stretch at 3-54 (SKKNKIVAALLAFFFGGLGIHKFYLGRVGQGILYILFCWTGIPSIIAFIEFI) folds into the TM2 domain. The next 2 helical transmembrane spans lie at 8–28 (IVAALLAFFFGGLGIHKFYLG) and 37–57 (ILFCWTGIPSIIAFIEFIIFL).

Its subcellular location is the cell membrane. This is an uncharacterized protein from Bacillus subtilis (strain 168).